The primary structure comprises 312 residues: Glyoxylate/hydroxypyruvate reductase A (312 aa).

Arg-227 is a catalytic residue. His-275 (proton donor) is an active-site residue.

Belongs to the D-isomer specific 2-hydroxyacid dehydrogenase family. GhrA subfamily.

The protein localises to the cytoplasm. It catalyses the reaction glycolate + NADP(+) = glyoxylate + NADPH + H(+). The catalysed reaction is (R)-glycerate + NAD(+) = 3-hydroxypyruvate + NADH + H(+). The enzyme catalyses (R)-glycerate + NADP(+) = 3-hydroxypyruvate + NADPH + H(+). Catalyzes the NADPH-dependent reduction of glyoxylate and hydroxypyruvate into glycolate and glycerate, respectively. The sequence is that of Glyoxylate/hydroxypyruvate reductase A from Escherichia coli (strain UTI89 / UPEC).